Consider the following 115-residue polypeptide: Non-specific lipid-transfer protein 4.3 (115 aa).

An N-terminal signal peptide occupies residues 1 to 25; the sequence is MARAAATQLVLVAMVAAMLLVATDA. 4 disulfide bridges follow: C29/C77, C39/C54, C55/C97, and C75/C111.

Belongs to the plant LTP family.

Functionally, plant non-specific lipid-transfer proteins transfer phospholipids as well as galactolipids across membranes. May play a role in wax or cutin deposition in the cell walls of expanding epidermal cells and certain secretory tissues. This Hordeum vulgare (Barley) protein is Non-specific lipid-transfer protein 4.3 (LTP4.3).